The chain runs to 759 residues: Solute carrier family 26 member 6 (759 aa).

Residues 1-115 (MGLADASGPR…PQGLAYALLA (115 aa)) are Cytoplasmic-facing. The helical transmembrane segment at 116–136 (GLPPVFGLYSSFYPVFIYFLF) threads the bilayer. Topologically, residues 137-186 (GTSRHISVGTFAVMSVMVGSVTESLAPQALNDSMINETARDAARVQVAST) are extracellular. Residues Asn167 and Asn172 are each glycosylated (N-linked (GlcNAc) asparagine). A helical membrane pass occupies residues 187–207 (LSVLVGLFQVGLGLIHFGFVV). Residues 208 to 263 (TYLSEPLVRGYTTAAAVQVFVSQLKYVFGLHLSSHSGPLSLIYTVLEVCWKLPQSK) lie on the Cytoplasmic side of the membrane. The helical transmembrane segment at 264–284 (VGTVVTAAVAGVVLVVVKLLN) threads the bilayer. Over 285–293 (DKLQQQLPM) the chain is Extracellular. Residues 294 to 314 (PIPGELLTLIGATGISYGMGL) traverse the membrane as a helical segment. The Cytoplasmic portion of the chain corresponds to 315–347 (KHRFEVDVVGNIPAGLVPPVAPNTQLFSKLVGS). The chain crosses the membrane as a helical span at residues 348 to 368 (AFTIAVVGFAIAISLGKIFAL). Over 369-379 (RHGYRVDSNQE) the chain is Extracellular. A helical membrane pass occupies residues 380-400 (LVALGLSNLIGGIFQCFPVSC). The Cytoplasmic portion of the chain corresponds to 401–416 (SMSRSLVQESTGGNSQ). Residues 417 to 437 (VAGAISSLFILLIIVKLGELF) form a helical membrane-spanning segment. The Extracellular portion of the chain corresponds to 438 to 484 (HDLPKAVLAAIIIVNLKGMLRQLSDMRSLWKANRADLLIWLVTFTAT). A helical transmembrane segment spans residues 485–505 (ILLNLDLGLVVAVIFSLLLVV). The Cytoplasmic portion of the chain corresponds to 506-759 (VRTQMPHYSV…PDSPVSVTRL (254 aa)). The STAS domain occupies 530-742 (EYSEAKEVRG…ASVHDAVTFA (213 aa)). Residues Asn553 and Lys582 each carry the phosphoserine; by PKC modification. The residue at position 616 (Ser616) is a Phosphoserine. The tract at residues 636–657 (GDKMEDATANGQEDSKAPDGST) is disordered. A phosphoserine mark is found at Ser752 and Ser755.

The protein belongs to the SLC26A/SulP transporter (TC 2.A.53) family. As to quaternary structure, interacts (via C-terminal domain) with PDZK1 (via C-terminal PDZ domain); the interaction induces chloride and oxalate exchange transport. Interacts with CFTR and SLC26A3. Interacts with AHCYL1; the interaction increases SLC26A6 activity. In terms of assembly, interacts with NHERF1 (via the PDZ domains) and NHERF2 (via the PDZ domains). Interacts (via C-terminal cytoplasmic domain) with CA2; the interaction stimulates chloride-bicarbonate exchange activity. Interacts with NHERF1 (via the PDZ domains) and NHERF2 (via the PDZ domains). In terms of processing, phosphorylated on serine residues by PKC; the phosphorylation disrupts interaction with carbonic anhydrase CA2 and reduces bicarbonate transport activity in a phorbol myristate acetate (PMA)-induced manner. Glycosylation at Asn-167 and Asn-172 positively regulates its chloride oxalate exchanger activity. In terms of tissue distribution, ubiquitous. Highest levels in kidney and pancreas. Lower expression in heart, skeletal muscle, liver and placenta. Also found in lung and brain. Ubiquitously expressed. Highest levels expressed in the kidney and pancreas. As to expression, expressed weakly in placenta, lung, liver and pancreas. In terms of tissue distribution, expressed in heart, brain, placenta, lung, liver, kidney, pancreas, spleen, thymus, prostate, testis and ovary.

It is found in the cell membrane. The protein resides in the apical cell membrane. It localises to the cytoplasmic vesicle membrane. Its subcellular location is the microsome. The protein localises to the basolateral cell membrane. The enzyme catalyses 2 hydrogencarbonate(in) + chloride(out) = 2 hydrogencarbonate(out) + chloride(in). It catalyses the reaction oxalate(in) + chloride(out) = oxalate(out) + chloride(in). It carries out the reaction oxalate(in) + formate(out) = oxalate(out) + formate(in). The catalysed reaction is oxalate(in) + sulfate(out) = oxalate(out) + sulfate(in). The enzyme catalyses 2 hydrogencarbonate(out) + sulfate(in) = 2 hydrogencarbonate(in) + sulfate(out). With respect to regulation, oxalate transport activity is inhibited by 4,4'-diisothiocyanatostilbene-2,2'-disulfonic acid (DIDS). Chloride, bicarbonate and sulfate transport activities are inhibited by 4,4'-diisothiocyanatostilbene-2,2'-disulfonic acid (DIDS). In terms of biological role, apical membrane anion-exchanger with wide epithelial distribution that plays a role as a component of the pH buffering system for maintaining acid-base homeostasis. Acts as a versatile DIDS-sensitive inorganic and organic anion transporter that mediates the uptake of monovalent anions like chloride, bicarbonate, formate and hydroxyl ion and divalent anions like sulfate and oxalate. Functions in multiple exchange modes involving pairs of these anions, which include chloride-bicarbonate, chloride-oxalate, oxalate-formate, oxalate-sulfate and chloride-formate exchange. Apical membrane chloride-bicarbonate exchanger that mediates luminal chloride absorption and bicarbonate secretion by the small intestinal brush border membrane and contributes to intracellular pH regulation in the duodenal upper villous epithelium during proton-coupled peptide absorption, possibly by providing a bicarbonate import pathway. Also mediates intestinal chloride absorption and oxalate secretion, thereby preventing hyperoxaluria and calcium oxalate urolithiasis. Transepithelial oxalate secretion, chloride-formate, chloride-oxalate and chloride-bicarbonate transport activities in the duodenum are inhibited by PKC activation in a calcium-independent manner. The apical membrane chloride-bicarbonate exchanger also provides a major route for fluid and bicarbonate secretion into the proximal tubules of the kidney as well as into the proximal part of the interlobular pancreatic ductal tree, where it mediates electrogenic chloride-bicarbonate exchange with a chloride-bicarbonate stoichiometry of 1:2, and hence will dilute and alkalinize protein-rich acinar secretion. Also mediates the transcellular sulfate absorption and oxalate secretion across the apical membrane in the duodenum and the formate ion efflux at the apical brush border of cells in the proximal tubules of kidney. Plays a role in sperm capacitation by increasing intracellular pH. Its function is as follows. Apical membrane chloride-bicarbonate exchanger. Its association with carbonic anhydrase CA2 forms a bicarbonate transport metabolon; hence maximizes the local concentration of bicarbonate at the transporter site. The sequence is that of Solute carrier family 26 member 6 (SLC26A6) from Homo sapiens (Human).